A 366-amino-acid chain; its full sequence is tRNA/tmRNA (uracil-C(5))-methyltransferase (366 aa).

S-adenosyl-L-methionine contacts are provided by Gln190, Tyr218, Asn223, Glu239, and Asp299. The active-site Nucleophile is Cys324. Glu358 acts as the Proton acceptor in catalysis.

The protein belongs to the class I-like SAM-binding methyltransferase superfamily. RNA M5U methyltransferase family. TrmA subfamily.

It carries out the reaction uridine(54) in tRNA + S-adenosyl-L-methionine = 5-methyluridine(54) in tRNA + S-adenosyl-L-homocysteine + H(+). It catalyses the reaction uridine(341) in tmRNA + S-adenosyl-L-methionine = 5-methyluridine(341) in tmRNA + S-adenosyl-L-homocysteine + H(+). In terms of biological role, dual-specificity methyltransferase that catalyzes the formation of 5-methyluridine at position 54 (m5U54) in all tRNAs, and that of position 341 (m5U341) in tmRNA (transfer-mRNA). This is tRNA/tmRNA (uracil-C(5))-methyltransferase from Klebsiella pneumoniae (strain 342).